The sequence spans 164 residues: Ubiquitin-fold modifier-conjugating enzyme 1 (164 aa).

The active-site Glycyl thioester intermediate is Cys116.

Belongs to the ubiquitin-conjugating enzyme family. UFC1 subfamily.

In terms of biological role, E2-like enzyme which forms an intermediate with UFM1 via a thioester linkage. This Drosophila persimilis (Fruit fly) protein is Ubiquitin-fold modifier-conjugating enzyme 1.